The primary structure comprises 337 residues: Tetraacyldisaccharide 4'-kinase (337 aa).

58–65 is a binding site for ATP; the sequence is TVGGSGKT.

This sequence belongs to the LpxK family.

It catalyses the reaction a lipid A disaccharide + ATP = a lipid IVA + ADP + H(+). It participates in glycolipid biosynthesis; lipid IV(A) biosynthesis; lipid IV(A) from (3R)-3-hydroxytetradecanoyl-[acyl-carrier-protein] and UDP-N-acetyl-alpha-D-glucosamine: step 6/6. Transfers the gamma-phosphate of ATP to the 4'-position of a tetraacyldisaccharide 1-phosphate intermediate (termed DS-1-P) to form tetraacyldisaccharide 1,4'-bis-phosphate (lipid IVA). The polypeptide is Tetraacyldisaccharide 4'-kinase (Shewanella putrefaciens (strain CN-32 / ATCC BAA-453)).